A 540-amino-acid polypeptide reads, in one-letter code: Cytochrome P450 monooxygenase CYP3 (540 aa).

Residue N2 is glycosylated (N-linked (GlcNAc...) asparagine). A helical transmembrane segment spans residues 26–46 (IFGLSSSTLVVLVAMIAVSTL). N-linked (GlcNAc...) asparagine glycans are attached at residues N100, N210, and N400. C471 contacts heme.

It belongs to the cytochrome P450 family. It depends on heme as a cofactor.

The protein resides in the membrane. Its pathway is secondary metabolite biosynthesis. In terms of biological role, cytochrome P450 monooxygenase; part of the gene cluster that mediates the biosynthesis of itaconic acid and 2-hydroxyparaconate. Cis-aconitate is secreted by the mitochondrial tricarboxylate transporter MTT1. In the cytosol cis-aconitate is converted into trans-aconitate via isomerization by the aconitate-delta-isomerase ADI1. Decarboxylation of trans-aconitate by the trans-aconitate decarboxylase TAD1 then leads then to the production of itaconic acid. The cytochrome P450 monooxygenase CYP3 further converts itaconate to 2-hydroxyparaconate via oxidation of the double bond, leading to a transient epoxide, which can subsequently be lactonized to produce 2-hydroxyparaconate. Secretion of itaconate and possibly 2-hydroxyparaconate into the medium is mediated by the major facilitator ITP1. The glyoxalase domain-containing protein RDO1 is not involved in the biosynthesis of itaconate and 2-hydroxyparaconate, however, it might play a role in the further conversion of 2-hydroxyparaconate to itatartarate. This chain is Cytochrome P450 monooxygenase CYP3, found in Mycosarcoma maydis (Corn smut fungus).